We begin with the raw amino-acid sequence, 166 residues long: Large ribosomal subunit protein uL10 (166 aa).

Belongs to the universal ribosomal protein uL10 family. Part of the ribosomal stalk of the 50S ribosomal subunit. The N-terminus interacts with L11 and the large rRNA to form the base of the stalk. The C-terminus forms an elongated spine to which L12 dimers bind in a sequential fashion forming a multimeric L10(L12)X complex.

Functionally, forms part of the ribosomal stalk, playing a central role in the interaction of the ribosome with GTP-bound translation factors. This Streptococcus agalactiae serotype III (strain NEM316) protein is Large ribosomal subunit protein uL10.